A 307-amino-acid polypeptide reads, in one-letter code: UDP-3-O-acyl-N-acetylglucosamine deacetylase (307 aa).

3 residues coordinate Zn(2+): His78, His241, and Asp245. His268 serves as the catalytic Proton donor.

This sequence belongs to the LpxC family. Zn(2+) serves as cofactor.

It carries out the reaction a UDP-3-O-[(3R)-3-hydroxyacyl]-N-acetyl-alpha-D-glucosamine + H2O = a UDP-3-O-[(3R)-3-hydroxyacyl]-alpha-D-glucosamine + acetate. Its pathway is glycolipid biosynthesis; lipid IV(A) biosynthesis; lipid IV(A) from (3R)-3-hydroxytetradecanoyl-[acyl-carrier-protein] and UDP-N-acetyl-alpha-D-glucosamine: step 2/6. Catalyzes the hydrolysis of UDP-3-O-myristoyl-N-acetylglucosamine to form UDP-3-O-myristoylglucosamine and acetate, the committed step in lipid A biosynthesis. In Paracidovorax citrulli (strain AAC00-1) (Acidovorax citrulli), this protein is UDP-3-O-acyl-N-acetylglucosamine deacetylase.